The chain runs to 694 residues: Ribonuclease R (694 aa).

Positions R204 to L525 constitute an RNB domain. Positions A571–V648 constitute an S1 motif domain. The segment at T652–N694 is disordered. Composition is skewed to basic residues over residues A654–K664 and E672–N694.

This sequence belongs to the RNR ribonuclease family. RNase R subfamily.

It is found in the cytoplasm. The enzyme catalyses Exonucleolytic cleavage in the 3'- to 5'-direction to yield nucleoside 5'-phosphates.. In terms of biological role, 3'-5' exoribonuclease that releases 5'-nucleoside monophosphates and is involved in maturation of structured RNAs. The chain is Ribonuclease R from Chlamydia trachomatis serovar D (strain ATCC VR-885 / DSM 19411 / UW-3/Cx).